A 130-amino-acid chain; its full sequence is NADH-quinone oxidoreductase subunit A (130 aa).

3 helical membrane-spanning segments follow: residues 15–35 (AIHVALSAGIVAAIIVVATII), 67–87 (FLIAALFVIFDMEAAILFAWA), and 95–115 (WVGLIEAAIFIGVLLLALIYL).

The protein belongs to the complex I subunit 3 family. In terms of assembly, NDH-1 is composed of 14 different subunits. Subunits NuoA, H, J, K, L, M, N constitute the membrane sector of the complex.

It localises to the cell inner membrane. It carries out the reaction a quinone + NADH + 5 H(+)(in) = a quinol + NAD(+) + 4 H(+)(out). In terms of biological role, NDH-1 shuttles electrons from NADH, via FMN and iron-sulfur (Fe-S) centers, to quinones in the respiratory chain. The immediate electron acceptor for the enzyme in this species is believed to be ubiquinone. Couples the redox reaction to proton translocation (for every two electrons transferred, four hydrogen ions are translocated across the cytoplasmic membrane), and thus conserves the redox energy in a proton gradient. The polypeptide is NADH-quinone oxidoreductase subunit A (Rhodopseudomonas palustris (strain BisA53)).